We begin with the raw amino-acid sequence, 155 residues long: Deoxyuridine 5'-triphosphate nucleotidohydrolase (155 aa).

Substrate is bound by residues Arg74–Gly76, Asn87, and Thr91–Asp93.

This sequence belongs to the dUTPase family. Mg(2+) is required as a cofactor.

The catalysed reaction is dUTP + H2O = dUMP + diphosphate + H(+). It functions in the pathway pyrimidine metabolism; dUMP biosynthesis; dUMP from dCTP (dUTP route): step 2/2. Its function is as follows. This enzyme is involved in nucleotide metabolism: it produces dUMP, the immediate precursor of thymidine nucleotides and it decreases the intracellular concentration of dUTP so that uracil cannot be incorporated into DNA. This Cereibacter sphaeroides (strain KD131 / KCTC 12085) (Rhodobacter sphaeroides) protein is Deoxyuridine 5'-triphosphate nucleotidohydrolase.